The chain runs to 3658 residues: Serine/threonine-protein kinase SMG1 (3658 aa).

Disordered stretches follow at residues 1 to 99 (MSRR…TYGR) and 116 to 142 (FTSV…MSYS). Over residues 24–33 (NDWQPRTDSA) the composition is skewed to polar residues. Composition is skewed to basic and acidic residues over residues 67-84 (QRHD…DEKG) and 127-136 (ATKDMRKSQE). Lysine 171 is modified (N6-acetyllysine). One can recognise an FAT domain in the interval 1281–1864 (RELQKSIEVQ…LYPAIVGTIS (584 aa)). The stretch at 1815-1850 (APWRGIIPQLFSRLNHPEVYVRQSICNLLCRVAQDS) is one HEAT repeat. The interval 1896 to 1917 (ECEGGSPPASQDSNKDEPKSGL) is disordered. The 340-residue stretch at 2122-2461 (VGGTITILPT…MEREITRSLF (340 aa)) folds into the PI3K/PI4K catalytic domain. The segment at 2128–2134 (ILPTKTK) is G-loop. The catalytic loop stretch occupies residues 2330–2338 (GLGDRHLDN). The segment at 2350–2374 (HIDYNVCFEKGKSLRVPEKVPFRMT) is activation loop. Residue threonine 3547 is modified to Phosphothreonine. Phosphoserine occurs at positions 3553 and 3567. Over residues 3565–3576 (ATSADTPPSTIP) the composition is skewed to polar residues. Residues 3565–3588 (ATSADTPPSTIPGTGKSIACSPKK) form a disordered region. Threonine 3570 and threonine 3574 each carry phosphothreonine. One can recognise an FATC domain in the interval 3626–3658 (RRMSVAEQVDYVIKEATNLDNLAQLYEGWTAWV).

It belongs to the PI3/PI4-kinase family. In terms of assembly, component of the SMG1C complex composed of SMG1, SMG8 and SMG9; the recruitment of SMG8 to SMG1 N-terminus induces a large conformational change in the SMG1 C-terminal head domain containing the catalytic domain. Component of the transient SURF (SMG1-UPF1-eRF1-eRF3) complex. Part of a complex composed of SMG1, DHX34 and UPF1; within the complex DHX34 acts as a scaffolding protein to facilitate SMG1 phosphorylation of UPF1. Interacts with PRKCI. Interacts with TELO2 and TTI1. Interacts with RUVBL1 and RUVBL2. Interacts with DHX34 (via C-terminus); the interaction is RNA-independent. Requires Mn(2+) as cofactor. Post-translationally, autophosphorylated.

It is found in the nucleus. It localises to the cytoplasm. It carries out the reaction L-seryl-[protein] + ATP = O-phospho-L-seryl-[protein] + ADP + H(+). It catalyses the reaction L-threonyl-[protein] + ATP = O-phospho-L-threonyl-[protein] + ADP + H(+). With respect to regulation, inhibited by caffeine, LY294002 and wortmannin. Functionally, serine/threonine protein kinase involved in both mRNA surveillance and genotoxic stress response pathways. Recognizes the substrate consensus sequence [ST]-Q. Plays a central role in nonsense-mediated decay (NMD) of mRNAs containing premature stop codons by phosphorylating UPF1/RENT1. Recruited by release factors to stalled ribosomes together with SMG8 and SMG9 (forming the SMG1C protein kinase complex), and UPF1 to form the transient SURF (SMG1-UPF1-eRF1-eRF3) complex. In EJC-dependent NMD, the SURF complex associates with the exon junction complex (EJC) through UPF2 and allows the formation of an UPF1-UPF2-UPF3 surveillance complex which is believed to activate NMD. Also acts as a genotoxic stress-activated protein kinase that displays some functional overlap with ATM. Can phosphorylate p53/TP53 and is required for optimal p53/TP53 activation after cellular exposure to genotoxic stress. Its depletion leads to spontaneous DNA damage and increased sensitivity to ionizing radiation (IR). May activate PRKCI but not PRKCZ. The sequence is that of Serine/threonine-protein kinase SMG1 from Mus musculus (Mouse).